A 246-amino-acid polypeptide reads, in one-letter code: MGVALWLCPKRNTPTYDKLITVMSSLNTLFPGSPPKFEPHITITTNISLDLADQSKTKDDVDRILSASAVAMNSLPKNHESLVKLGNVNSQRKFFKKLYFEVEKDPNLVSFARIIRELFVIVPQDIEKENIKQNPQLYTKDNNGNTIRRKPSKKKSKTTEVKEFDTSFIRQAAAYKAAEWSVQEFDPHISLVYSDLWPLHSALWRNINTRISDIDWDIEWEFGVLKLVLCEGDVNDWVVLGSVDIH.

The Proton donor/acceptor role is filled by histidine 40. Position 42 (threonine 42) interacts with substrate. Residues 133–146 (QNPQLYTKDNNGNT) show a composition bias toward polar residues. The segment at 133 to 159 (QNPQLYTKDNNGNTIRRKPSKKKSKTT) is disordered. Residues 147–156 (IRRKPSKKKS) show a composition bias toward basic residues. Catalysis depends on histidine 188, which acts as the Proton donor/acceptor. Substrate contacts are provided by serine 190 and tyrosine 193.

This sequence belongs to the 2H phosphoesterase superfamily. CPD1 family.

The protein resides in the golgi apparatus. It catalyses the reaction a nucleoside 2',3'-cyclic phosphate + H2O = a nucleoside 2'-phosphate + H(+). In terms of biological role, involved in the metabolism of ADP-ribose 1',2'-cyclic phosphate which is produced as a consequence of tRNA splicing. In Candida albicans (strain SC5314 / ATCC MYA-2876) (Yeast), this protein is 2',3'-cyclic-nucleotide 3'-phosphodiesterase (CPD1).